A 765-amino-acid polypeptide reads, in one-letter code: uncharacterized protein (765 aa).

Disordered regions lie at residues 9 to 61 (NDGN…PSSV), 128 to 164 (QQQQ…NYTS), 265 to 289 (TTSS…NITT), 301 to 373 (WTTT…TYIQ), 409 to 526 (IGNN…NQSN), 540 to 560 (PTKK…KYSE), and 668 to 765 (NSNT…KSRI). Low complexity-rich tracts occupy residues 40–61 (SNNI…PSSV) and 143–161 (SNKS…NNNN). 7 stretches are compositionally biased toward low complexity: residues 301 to 311 (WTTTKPTSSTK), 325 to 344 (YDSP…STSS), 353 to 373 (IQPT…TYIQ), 414 to 428 (SNHT…SLST), 438 to 485 (NNNN…INNN), 495 to 504 (DNQSSYSSPD), and 513 to 526 (SQQQ…NQSN). The segment covering 668–745 (NSNTDNYNYY…NNSRNNYNNN (78 aa)) has biased composition (low complexity).

This is an uncharacterized protein from Dictyostelium discoideum (Social amoeba).